Reading from the N-terminus, the 208-residue chain is Proheparin-binding EGF-like growth factor (208 aa).

The first 23 residues, 1–23, serve as a signal peptide directing secretion; the sequence is MKLLPSVMLKLFLAAVLSALVTG. Positions 24–62 are excised as a propeptide; the sequence is ESLERLRRGLAAATSNPDPPTGSTNQLLPTGGDRAQGVQ. Residues 24-160 lie on the Extracellular side of the membrane; that stretch reads ESLERLRRGL…ENPLYTYDHT (137 aa). Disordered stretches follow at residues 35–57 and 80–104; these read AATS…GGDR and PQGL…LGKK. Residues 36–51 show a composition bias toward polar residues; sequence ATSNPDPPTGSTNQLL. Residue Thr85 is glycosylated (O-linked (GalNAc...) threonine). Basic residues predominate over residues 91 to 102; the sequence is NGKKKKKGKGLG. The EGF-like domain maps to 104 to 144; the sequence is KRDPCLRKYKDYCIHGECRYLQEFRTPSCKCLPGYHGHRCH. Disulfide bonds link Cys108–Cys121, Cys116–Cys132, and Cys134–Cys143. Positions 149–208 are cleaved as a propeptide — C-terminal; that stretch reads PVENPLYTYDHTTVLAVVAVVLSSVCLLVIVGLLMFRYHRRGGYDLESEEKVKLGVASSH. The helical transmembrane segment at 161-184 threads the bilayer; it reads TVLAVVAVVLSSVCLLVIVGLLMF. Topologically, residues 185–208 are cytoplasmic; the sequence is RYHRRGGYDLESEEKVKLGVASSH.

Interacts with FBLN1. Interacts with EGFR and ERBB4. Post-translationally, O-glycosylated. In terms of tissue distribution, most abundant in kidney, skeletal muscle, lung, spleen, brain and heart.

It is found in the secreted. The protein resides in the extracellular space. Its subcellular location is the cell membrane. In terms of biological role, growth factor that mediates its effects via EGFR, ERBB2 and ERBB4. Required for normal cardiac valve formation and normal heart function. Promotes smooth muscle cell proliferation. May be involved in macrophage-mediated cellular proliferation. It is mitogenic for fibroblasts, but not endothelial cells. It is able to bind EGF receptor/EGFR with higher affinity than EGF itself and is a far more potent mitogen for smooth muscle cells than EGF. Also acts as a diphtheria toxin receptor. In Mus musculus (Mouse), this protein is Proheparin-binding EGF-like growth factor (Hbegf).